Consider the following 157-residue polypeptide: Transcription elongation factor GreA (157 aa).

This sequence belongs to the GreA/GreB family.

Necessary for efficient RNA polymerase transcription elongation past template-encoded arresting sites. The arresting sites in DNA have the property of trapping a certain fraction of elongating RNA polymerases that pass through, resulting in locked ternary complexes. Cleavage of the nascent transcript by cleavage factors such as GreA or GreB allows the resumption of elongation from the new 3'terminus. GreA releases sequences of 2 to 3 nucleotides. This is Transcription elongation factor GreA from Brucella abortus (strain S19).